We begin with the raw amino-acid sequence, 370 residues long: ADP-ribosylation factor-like protein 13B (370 aa).

S-palmitoyl cysteine attachment occurs at residues Cys-12, Cys-13, Cys-14, and Cys-15. Residues 31–38 (GIGSAGKT), 75–79 (DVGGD), and 134–137 (NNQN) contribute to the GTP site. Residue Lys-239 forms a Glycyl lysine isopeptide (Lys-Gly) (interchain with G-Cter in SUMO) linkage. The segment at 255–331 (RNQPPVQPPI…PVSPESNSVK (77 aa)) is disordered. Residues 259–271 (PVQPPIPPDPPSD) are compositionally biased toward pro residues. Polar residues-rich tracts occupy residues 287 to 303 (LASSTIPSDIIQSTPET) and 314 to 328 (RISQTSTKPVSPESN). Residue Lys-331 forms a Glycyl lysine isopeptide (Lys-Gly) (interchain with G-Cter in SUMO) linkage. The interval 366-369 (RVVP) is RVVP region.

It belongs to the small GTPase superfamily. Arf family. In terms of assembly, monomer. Sumoylation regulates the targeting of membrane sensory receptors to the cilium. Specifically expressed in ciliated sensory neurons throughout development in both hermaphrodites.

The protein localises to the cell projection. The protein resides in the cilium membrane. Functionally, cilium-specific protein required to control the microtubule-based, ciliary axoneme structure. Required for normal sensory cilium function. May act by maintaining the association between IFT subcomplexes A and B. The sequence is that of ADP-ribosylation factor-like protein 13B (arl-13) from Caenorhabditis elegans.